A 484-amino-acid chain; its full sequence is tRNA sulfurtransferase (484 aa).

The THUMP domain maps to 63-167; sequence REMIERLTCT…DQRLYVIHNQ (105 aa). ATP is bound by residues 185 to 186, Lys267, Gly289, and Gln298; that span reads LM. Cys346 and Cys457 are joined by a disulfide. The Rhodanese domain occupies 405–483; that stretch reads ALPGQIVIDI…GHANVRVYRP (79 aa). Cys457 acts as the Cysteine persulfide intermediate in catalysis.

It belongs to the ThiI family.

It is found in the cytoplasm. The catalysed reaction is [ThiI sulfur-carrier protein]-S-sulfanyl-L-cysteine + a uridine in tRNA + 2 reduced [2Fe-2S]-[ferredoxin] + ATP + H(+) = [ThiI sulfur-carrier protein]-L-cysteine + a 4-thiouridine in tRNA + 2 oxidized [2Fe-2S]-[ferredoxin] + AMP + diphosphate. It catalyses the reaction [ThiS sulfur-carrier protein]-C-terminal Gly-Gly-AMP + S-sulfanyl-L-cysteinyl-[cysteine desulfurase] + AH2 = [ThiS sulfur-carrier protein]-C-terminal-Gly-aminoethanethioate + L-cysteinyl-[cysteine desulfurase] + A + AMP + 2 H(+). It functions in the pathway cofactor biosynthesis; thiamine diphosphate biosynthesis. Functionally, catalyzes the ATP-dependent transfer of a sulfur to tRNA to produce 4-thiouridine in position 8 of tRNAs, which functions as a near-UV photosensor. Also catalyzes the transfer of sulfur to the sulfur carrier protein ThiS, forming ThiS-thiocarboxylate. This is a step in the synthesis of thiazole, in the thiamine biosynthesis pathway. The sulfur is donated as persulfide by IscS. The protein is tRNA sulfurtransferase of Pseudomonas putida (strain ATCC 47054 / DSM 6125 / CFBP 8728 / NCIMB 11950 / KT2440).